Consider the following 394-residue polypeptide: NAD(P)H-quinone oxidoreductase subunit H (394 aa).

This sequence belongs to the complex I 49 kDa subunit family. In terms of assembly, NDH-1 can be composed of about 15 different subunits; different subcomplexes with different compositions have been identified which probably have different functions.

The protein localises to the cellular thylakoid membrane. The enzyme catalyses a plastoquinone + NADH + (n+1) H(+)(in) = a plastoquinol + NAD(+) + n H(+)(out). The catalysed reaction is a plastoquinone + NADPH + (n+1) H(+)(in) = a plastoquinol + NADP(+) + n H(+)(out). Functionally, NDH-1 shuttles electrons from an unknown electron donor, via FMN and iron-sulfur (Fe-S) centers, to quinones in the respiratory and/or the photosynthetic chain. The immediate electron acceptor for the enzyme in this species is believed to be plastoquinone. Couples the redox reaction to proton translocation, and thus conserves the redox energy in a proton gradient. Cyanobacterial NDH-1 also plays a role in inorganic carbon-concentration. The chain is NAD(P)H-quinone oxidoreductase subunit H from Prochlorococcus marinus (strain NATL2A).